The following is a 117-amino-acid chain: Large ribosomal subunit protein bL17 (117 aa).

This sequence belongs to the bacterial ribosomal protein bL17 family. Part of the 50S ribosomal subunit. Contacts protein L32.

The sequence is that of Large ribosomal subunit protein bL17 from Dehalococcoides mccartyi (strain ATCC BAA-2100 / JCM 16839 / KCTC 5957 / BAV1).